The following is a 1416-amino-acid chain: DNA-directed RNA polymerase subunit beta (1416 aa).

The segment at 1388 to 1416 (AKAAREQAEGELGGPLGTPRGAAAEKNTA) is disordered.

Belongs to the RNA polymerase beta chain family. In terms of assembly, the RNAP catalytic core consists of 2 alpha, 1 beta, 1 beta' and 1 omega subunit. When a sigma factor is associated with the core the holoenzyme is formed, which can initiate transcription.

It catalyses the reaction RNA(n) + a ribonucleoside 5'-triphosphate = RNA(n+1) + diphosphate. Its function is as follows. DNA-dependent RNA polymerase catalyzes the transcription of DNA into RNA using the four ribonucleoside triphosphates as substrates. The sequence is that of DNA-directed RNA polymerase subunit beta from Anaeromyxobacter sp. (strain Fw109-5).